The chain runs to 314 residues: 4-hydroxy-3-methylbut-2-enyl diphosphate reductase (314 aa).

Residue Cys12 participates in [4Fe-4S] cluster binding. (2E)-4-hydroxy-3-methylbut-2-enyl diphosphate-binding residues include His41 and His74. His41 and His74 together coordinate dimethylallyl diphosphate. Residues His41 and His74 each coordinate isopentenyl diphosphate. Cys96 is a [4Fe-4S] cluster binding site. His124 serves as a coordination point for (2E)-4-hydroxy-3-methylbut-2-enyl diphosphate. Residue His124 coordinates dimethylallyl diphosphate. Isopentenyl diphosphate is bound at residue His124. The active-site Proton donor is the Glu126. A (2E)-4-hydroxy-3-methylbut-2-enyl diphosphate-binding site is contributed by Thr168. Cys198 is a [4Fe-4S] cluster binding site. (2E)-4-hydroxy-3-methylbut-2-enyl diphosphate contacts are provided by Ser226, Ser227, Asn228, and Ser270. Dimethylallyl diphosphate is bound by residues Ser226, Ser227, Asn228, and Ser270. Residues Ser226, Ser227, Asn228, and Ser270 each contribute to the isopentenyl diphosphate site.

Belongs to the IspH family. [4Fe-4S] cluster is required as a cofactor.

It catalyses the reaction isopentenyl diphosphate + 2 oxidized [2Fe-2S]-[ferredoxin] + H2O = (2E)-4-hydroxy-3-methylbut-2-enyl diphosphate + 2 reduced [2Fe-2S]-[ferredoxin] + 2 H(+). The catalysed reaction is dimethylallyl diphosphate + 2 oxidized [2Fe-2S]-[ferredoxin] + H2O = (2E)-4-hydroxy-3-methylbut-2-enyl diphosphate + 2 reduced [2Fe-2S]-[ferredoxin] + 2 H(+). It functions in the pathway isoprenoid biosynthesis; dimethylallyl diphosphate biosynthesis; dimethylallyl diphosphate from (2E)-4-hydroxy-3-methylbutenyl diphosphate: step 1/1. Its pathway is isoprenoid biosynthesis; isopentenyl diphosphate biosynthesis via DXP pathway; isopentenyl diphosphate from 1-deoxy-D-xylulose 5-phosphate: step 6/6. Its function is as follows. Catalyzes the conversion of 1-hydroxy-2-methyl-2-(E)-butenyl 4-diphosphate (HMBPP) into a mixture of isopentenyl diphosphate (IPP) and dimethylallyl diphosphate (DMAPP). Acts in the terminal step of the DOXP/MEP pathway for isoprenoid precursor biosynthesis. The polypeptide is 4-hydroxy-3-methylbut-2-enyl diphosphate reductase (Pseudomonas aeruginosa (strain LESB58)).